The sequence spans 182 residues: Isopentenyl-diphosphate Delta-isomerase (182 aa).

Residues His-25 and His-32 each coordinate Mn(2+). In terms of domain architecture, Nudix hydrolase spans 30 to 164 (LLHLAFSSWL…PWAFSPWMVM (135 aa)). Cys-67 is an active-site residue. Cys-67 provides a ligand contact to Mg(2+). A Mn(2+)-binding site is contributed by His-69. Glu-87 provides a ligand contact to Mg(2+). Mn(2+)-binding residues include Glu-114 and Glu-116. Residue Glu-116 is part of the active site.

This sequence belongs to the IPP isomerase type 1 family. As to quaternary structure, homodimer. It depends on Mg(2+) as a cofactor. Mn(2+) is required as a cofactor.

The protein localises to the cytoplasm. It catalyses the reaction isopentenyl diphosphate = dimethylallyl diphosphate. It functions in the pathway isoprenoid biosynthesis; dimethylallyl diphosphate biosynthesis; dimethylallyl diphosphate from isopentenyl diphosphate: step 1/1. Catalyzes the 1,3-allylic rearrangement of the homoallylic substrate isopentenyl (IPP) to its highly electrophilic allylic isomer, dimethylallyl diphosphate (DMAPP). The polypeptide is Isopentenyl-diphosphate Delta-isomerase (Escherichia coli O6:H1 (strain CFT073 / ATCC 700928 / UPEC)).